A 161-amino-acid polypeptide reads, in one-letter code: GTP-dependent dephospho-CoA kinase (161 aa).

Residues D37, I38, D56, K58, E112, and D135 each coordinate GTP.

Belongs to the GTP-dependent DPCK family.

It catalyses the reaction 3'-dephospho-CoA + GTP = GDP + CoA + H(+). It participates in cofactor biosynthesis; coenzyme A biosynthesis. Its function is as follows. Catalyzes the GTP-dependent phosphorylation of the 3'-hydroxyl group of dephosphocoenzyme A to form coenzyme A (CoA). This is GTP-dependent dephospho-CoA kinase from Methanococcus aeolicus (strain ATCC BAA-1280 / DSM 17508 / OCM 812 / Nankai-3).